The primary structure comprises 486 residues: Siroheme synthase (486 aa).

The tract at residues 1-204 (MNYLPIFVDL…HQIEQAEALV (204 aa)) is precorrin-2 dehydrogenase /sirohydrochlorin ferrochelatase. NAD(+) contacts are provided by residues 22–23 (HI) and 43–44 (EK). At Ser-128 the chain carries Phosphoserine. The uroporphyrinogen-III C-methyltransferase stretch occupies residues 216-486 (GEVSLVGAGP…NKETHWKQAA (271 aa)). Pro-225 lines the S-adenosyl-L-methionine pocket. Catalysis depends on Asp-248, which acts as the Proton acceptor. Lys-270 functions as the Proton donor in the catalytic mechanism. Residues 301–303 (GGD), Val-306, 331–332 (TA), Met-383, and Gly-412 contribute to the S-adenosyl-L-methionine site.

It in the N-terminal section; belongs to the precorrin-2 dehydrogenase / sirohydrochlorin ferrochelatase family. The protein in the C-terminal section; belongs to the precorrin methyltransferase family.

The catalysed reaction is uroporphyrinogen III + 2 S-adenosyl-L-methionine = precorrin-2 + 2 S-adenosyl-L-homocysteine + H(+). The enzyme catalyses precorrin-2 + NAD(+) = sirohydrochlorin + NADH + 2 H(+). It catalyses the reaction siroheme + 2 H(+) = sirohydrochlorin + Fe(2+). The protein operates within cofactor biosynthesis; adenosylcobalamin biosynthesis; precorrin-2 from uroporphyrinogen III: step 1/1. It participates in cofactor biosynthesis; adenosylcobalamin biosynthesis; sirohydrochlorin from precorrin-2: step 1/1. Its pathway is porphyrin-containing compound metabolism; siroheme biosynthesis; precorrin-2 from uroporphyrinogen III: step 1/1. It functions in the pathway porphyrin-containing compound metabolism; siroheme biosynthesis; siroheme from sirohydrochlorin: step 1/1. The protein operates within porphyrin-containing compound metabolism; siroheme biosynthesis; sirohydrochlorin from precorrin-2: step 1/1. Functionally, multifunctional enzyme that catalyzes the SAM-dependent methylations of uroporphyrinogen III at position C-2 and C-7 to form precorrin-2 via precorrin-1. Then it catalyzes the NAD-dependent ring dehydrogenation of precorrin-2 to yield sirohydrochlorin. Finally, it catalyzes the ferrochelation of sirohydrochlorin to yield siroheme. This chain is Siroheme synthase, found in Actinobacillus pleuropneumoniae serotype 3 (strain JL03).